We begin with the raw amino-acid sequence, 225 residues long: Rho GDP-dissociation inhibitor 3 (225 aa).

It belongs to the Rho GDI family. In terms of tissue distribution, primarily expressed in pancreas and brain.

The protein resides in the cytoplasm. In terms of biological role, inhibits GDP/GTP exchange reaction of RhoB. Interacts specifically with the GDP- and GTP-bound forms of post-translationally processed Rhob and Rhog proteins, both of which show a growth-regulated expression in mammalian cells. Stimulates the release of the GDP-bound but not the GTP-bound RhoB protein. Also inhibits the GDP/GTP exchange of RhoB but shows less ability to inhibit the dissociation of prebound GTP. This chain is Rho GDP-dissociation inhibitor 3 (ARHGDIG), found in Homo sapiens (Human).